Here is an 812-residue protein sequence, read N- to C-terminus: ATP-dependent zinc metalloprotease FtsH (812 aa).

Over 1–21 (MPPSPPRPPKFPGSGRPESPN) the chain is Cytoplasmic. A helical transmembrane segment spans residues 22–42 (WGVWVMVLLIVGVLAFGFFTP). The Extracellular segment spans residues 43 to 241 (ESFGLGPRKE…TKFKRESGSW (199 aa)). Residues 242-262 (GGILLNLLPIVLILVILFFMF) traverse the membrane as a helical segment. The Cytoplasmic segment spans residues 263–812 (RAQSGGARGA…EFGKDGGEKK (550 aa)). 333–340 (GAPGTGKT) lines the ATP pocket. His-555 contacts Zn(2+). Residue Glu-556 is part of the active site. 2 residues coordinate Zn(2+): His-559 and Asp-631. Residues 739–812 (KNPPARVTPP…EFGKDGGEKK (74 aa)) form a disordered region. 2 stretches are compositionally biased toward basic and acidic residues: residues 757–785 (QPGK…RKME) and 803–812 (EFGKDGGEKK).

It in the central section; belongs to the AAA ATPase family. This sequence in the C-terminal section; belongs to the peptidase M41 family. In terms of assembly, homohexamer. Zn(2+) serves as cofactor.

The protein localises to the cell membrane. In terms of biological role, acts as a processive, ATP-dependent zinc metallopeptidase for both cytoplasmic and membrane proteins. Plays a role in the quality control of integral membrane proteins. This chain is ATP-dependent zinc metalloprotease FtsH, found in Akkermansia muciniphila (strain ATCC BAA-835 / DSM 22959 / JCM 33894 / BCRC 81048 / CCUG 64013 / CIP 107961 / Muc).